The following is a 128-amino-acid chain: Fluoride-specific ion channel FluC (128 aa).

4 helical membrane passes run 3–23 (LYAL…RWWF), 33–53 (TLPL…GAAI), 69–89 (FAIT…AETV), and 99–119 (WTFV…ILGI). Positions 76 and 79 each coordinate Na(+).

This sequence belongs to the fluoride channel Fluc/FEX (TC 1.A.43) family.

It localises to the cell inner membrane. The enzyme catalyses fluoride(in) = fluoride(out). Its activity is regulated as follows. Na(+) is not transported, but it plays an essential structural role and its presence is essential for fluoride channel function. In terms of biological role, fluoride-specific ion channel. Important for reducing fluoride concentration in the cell, thus reducing its toxicity. This Nitrosospira multiformis (strain ATCC 25196 / NCIMB 11849 / C 71) protein is Fluoride-specific ion channel FluC.